The chain runs to 159 residues: Calcium-binding protein CML39 (159 aa).

EF-hand domains follow at residues 18 to 53, 54 to 89, 93 to 128, and 129 to 159; these read EKNR…LGEQ, MSDE…NDEF, EKKR…LGES, and RTTD…LMMR. 10 residues coordinate Ca(2+): aspartate 31, asparagine 33, aspartate 35, arginine 37, glutamate 42, aspartate 67, aspartate 69, aspartate 71, methionine 73, and glutamate 78. The Ca(2+) site is built by aspartate 142, asparagine 144, aspartate 146, and glutamate 153.

Expressed in the zones of elongation and differentiation in seedling roots and at the root-hypocotyl junction. Expressed from stage 12 of flower development in anthers, specifically in pollen.

Potential calcium sensor that binds calcium in vitro. In Arabidopsis thaliana (Mouse-ear cress), this protein is Calcium-binding protein CML39 (CML39).